The primary structure comprises 300 residues: DNA repair protein PprA (300 aa).

T88 is modified (phosphothreonine). Residue S128 is modified to Phosphoserine. Residue T160 is modified to Phosphothreonine.

Post-translationally, phosphorylated by RqkA in vitro. Phosphorylated primarily at Thr-88, and to a little extent at Ser-128 and Thr-160.

Its activity is regulated as follows. Phosphorylation increases DNA binding affinity. Its function is as follows. dsDNA-binding protein that contributes to the ionizing radiation resistance of D.radiodurans. Plays a role in DNA repair and genome reconstitution, and is necessary for recovery from severe genomic fragmentation as a result of exposure to severe levels of ionizing radiation. In vitro, binds to double-stranded DNA carrying strand breaks and stimulates the DNA end-joining reaction catalyzed by DNA ligases. Thus, PprA plays a critical role in a non-homologous end-joining (NHEJ) pathway for the repair of radiation-induced DNA double-strands breaks. Cannot bind to dsDNA without strand breaks or single-stranded DNA. The polypeptide is DNA repair protein PprA (pprA) (Deinococcus radiodurans (strain ATCC 13939 / DSM 20539 / JCM 16871 / CCUG 27074 / LMG 4051 / NBRC 15346 / NCIMB 9279 / VKM B-1422 / R1)).